A 63-amino-acid chain; its full sequence is MASLKFPLEILAVFVIISVILLPIAQSHSSSPAPAPTSDGTSIDQGIAYVLMMVALALTYFIH.

An N-terminal signal peptide occupies residues M1–S27. 3 positions are modified to 4-hydroxyproline: P32, P34, and P36. 3 O-linked (Ara...) hydroxyproline glycosylation sites follow: P32, P34, and P36. Residue S38 is the site of GPI-anchor amidated serine attachment. A propeptide spans D39 to H63 (removed in mature form).

The protein belongs to the AG-peptide AGP family. In terms of processing, contains 4-hydroxyproline; hydroxylated on Pro-32, Pro-34 and Pro-36. Post-translationally, O-glycosylated on hydroxyprolines; noncontiguous hydroxylproline residues are glycosylated with arabinogalactan.

The protein localises to the cell membrane. Functionally, proteoglycan that seems to be implicated in diverse developmental roles such as differentiation, cell-cell recognition, embryogenesis and programmed cell death. The polypeptide is Arabinogalactan protein 22 (Arabidopsis thaliana (Mouse-ear cress)).